The primary structure comprises 299 residues: Dermonecrotic toxin LiSicTox-alphaIVA1 (299 aa).

The first 18 residues, 1–18 (MLFPTALIFGCWALVIEG), serve as a signal peptide directing secretion. The active site involves H30. Mg(2+) is bound by residues E50 and D52. The active-site Nucleophile is the H66. Intrachain disulfides connect C70–C76 and C72–C217. D110 provides a ligand contact to Mg(2+).

It belongs to the arthropod phospholipase D family. Class II subfamily. Class IIa sub-subfamily. The cofactor is Mg(2+). In terms of tissue distribution, expressed by the venom gland.

It localises to the secreted. It catalyses the reaction an N-(acyl)-sphingosylphosphocholine = an N-(acyl)-sphingosyl-1,3-cyclic phosphate + choline. It carries out the reaction an N-(acyl)-sphingosylphosphoethanolamine = an N-(acyl)-sphingosyl-1,3-cyclic phosphate + ethanolamine. The enzyme catalyses a 1-acyl-sn-glycero-3-phosphocholine = a 1-acyl-sn-glycero-2,3-cyclic phosphate + choline. The catalysed reaction is a 1-acyl-sn-glycero-3-phosphoethanolamine = a 1-acyl-sn-glycero-2,3-cyclic phosphate + ethanolamine. In terms of biological role, dermonecrotic toxins cleave the phosphodiester linkage between the phosphate and headgroup of certain phospholipids (sphingolipid and lysolipid substrates), forming an alcohol (often choline) and a cyclic phosphate. This toxin acts on sphingomyelin (SM) with high activity. It may also act on ceramide phosphoethanolamine (CPE), lysophosphatidylcholine (LPC) and lysophosphatidylethanolamine (LPE), but not on lysophosphatidylserine (LPS), and lysophosphatidylglycerol (LPG). It acts by transphosphatidylation, releasing exclusively cyclic phosphate products as second products. Has hemolytic activity in human erythrocytes in a dose-dependent manner. In vivo, this toxin induces dermonecrosis, edema, hemorrhage, massive inflammatory response, as well as vascular permeability. In addition, thrombus formation has also been detected in dermal blood vessels. It also induces platelet aggregation. It is noteworthy that a Glu-248 replaces the Asp present in paralogs, without decrease in catalytic and hemolytic activities. This chain is Dermonecrotic toxin LiSicTox-alphaIVA1, found in Loxosceles intermedia (Brown spider).